A 352-amino-acid chain; its full sequence is Mitochondrial adenine nucleotide transporter ADNT1 (352 aa).

Solcar repeat units lie at residues 36–123 (KSIC…ASNG), 139–227 (LTPL…LKDW), and 242–343 (LTVV…VKDV). 6 helical membrane passes run 41 to 61 (SLFAGGVAGGVSRTAVAPLER), 100 to 120 (GTNCARIVPNSAVKFFSYEQA), 145 to 162 (LGAGATAGIIAMSATYPM), 202 to 221 (GWLPSVIGVVPYVGLNFSVY), 242 to 263 (LTVVTRLTCGAIAGTVGQTIAY), and 324 to 340 (VKVVPSIAIAFVTYEMV).

Belongs to the mitochondrial carrier (TC 2.A.29) family. Expressed in seedling radicles and roots, vasculature of cotyledons, leaf primordia, leaves and sepals.

Its subcellular location is the mitochondrion inner membrane. With respect to regulation, inhibited by pyridoxal 5-phosphate, bathophenanthroline, mersalyl, p-hydroxymercuribenzoate and tannic acid. In terms of biological role, mitochondrial adenylate carrier that catalyzes specifically the transport of ATP, ADP and AMP by a counter-exchange mechanism across the inner mitochondrial membrane. Substrate preference in reconstituted proteoliposomes is ATP &gt; AMP &gt; ADP. May play a role in oxidative phosphorylation and be important for the provision of energy required to support growth in heterotrophic tissues. The chain is Mitochondrial adenine nucleotide transporter ADNT1 (ADNT1) from Arabidopsis thaliana (Mouse-ear cress).